The primary structure comprises 120 residues: Histone H2B (120 aa).

Positions Met-1 to Lys-26 are disordered. At Ala-2 the chain carries Blocked amino end (Ala). 3 positions are modified to N6-acetyllysine: Lys-7, Lys-10, and Lys-11. Residue Lys-115 forms a Glycyl lysine isopeptide (Lys-Gly) (interchain with G-Cter in ubiquitin) linkage.

It belongs to the histone H2B family. In terms of assembly, the nucleosome is a histone octamer containing two molecules each of H2A, H2B, H3 and H4 assembled in one H3-H4 heterotetramer and two H2A-H2B heterodimers. The octamer wraps approximately 147 bp of DNA. Post-translationally, can be acetylated to form H2BK6ac, H2BK33ac and H2BK34ac. Monoubiquitinated to form H2BK143ub1; may give a specific tag for epigenetic transcriptional activation.

It is found in the nucleus. The protein resides in the chromosome. Its function is as follows. Core component of nucleosome. Nucleosomes wrap and compact DNA into chromatin, limiting DNA accessibility to the cellular machineries which require DNA as a template. Histones thereby play a central role in transcription regulation, DNA repair, DNA replication and chromosomal stability. DNA accessibility is regulated via a complex set of post-translational modifications of histones, also called histone code, and nucleosome remodeling. In Pisum sativum (Garden pea), this protein is Histone H2B.